A 477-amino-acid chain; its full sequence is Glycogen synthase (477 aa).

Residue Lys-15 coordinates ADP-alpha-D-glucose.

The protein belongs to the glycosyltransferase 1 family. Bacterial/plant glycogen synthase subfamily.

It catalyses the reaction [(1-&gt;4)-alpha-D-glucosyl](n) + ADP-alpha-D-glucose = [(1-&gt;4)-alpha-D-glucosyl](n+1) + ADP + H(+). The protein operates within glycan biosynthesis; glycogen biosynthesis. Synthesizes alpha-1,4-glucan chains using ADP-glucose. The chain is Glycogen synthase from Klebsiella pneumoniae (strain 342).